Consider the following 607-residue polypeptide: Zinc finger protein 750 (607 aa).

A CCHC-type zinc finger spans residues 25–51; sequence YQCFQCPFTCNIKSHLFNHMKYNLCKN. The Zn(2+) site is built by Cys27, Cys30, His43, and Cys49. Positions 60-78 are enriched in polar residues; sequence MEQTGKASRASQHSPAFSH. Disordered regions lie at residues 60 to 133, 318 to 467, 482 to 511, and 575 to 607; these read MEQT…DKSE, RAVQ…SSQE, QALP…QDLE, and GQKR…SQNC. Basic and acidic residues-rich tracts occupy residues 79 to 133 and 318 to 334; these read NSKE…DKSE and RAVQ…RESP. Positions 369–380 are enriched in low complexity; it reads HSGSQSHIISGS. The segment covering 421-432 has biased composition (acidic residues); sequence DKEEDEETEEEI. Over residues 452 to 462 the composition is skewed to basic and acidic residues; the sequence is HYPDRELHYDS. The span at 496–507 shows a compositional bias: polar residues; it reads ISNAEVSTTESP. Residues 579 to 592 are compositionally biased toward basic residues; that stretch reads ANNRPLRHTNKRAK.

The protein resides in the nucleus. Functionally, transcription factor involved in epidermis differentiation. The protein is Zinc finger protein 750 (znf750) of Danio rerio (Zebrafish).